Reading from the N-terminus, the 114-residue chain is rRNA-processing protein cgrA (114 aa).

Residues 1–96 (MSASESAPSA…YDKMAEKMHR (96 aa)) form a disordered region. Residues 40–101 (AKRLEARKHQ…EKMHRKRVER (62 aa)) adopt a coiled-coil conformation. Basic and acidic residues predominate over residues 41-93 (KRLEARKHQEAVKEHERELKEEKEAERQAHIQRIKDRRAAKEEKERYDKMAEK).

This sequence belongs to the CGR1 family.

It localises to the nucleus. The protein resides in the nucleolus. Functionally, involved in nucleolar integrity and required for processing of the pre-rRNA for the 60S ribosome subunit. In Aspergillus terreus (strain NIH 2624 / FGSC A1156), this protein is rRNA-processing protein cgrA (cgrA).